The primary structure comprises 248 residues: 14-3-3 protein homolog 2 (248 aa).

The protein belongs to the 14-3-3 family.

The sequence is that of 14-3-3 protein homolog 2 from Echinococcus granulosus (Hydatid tapeworm).